The following is a 150-amino-acid chain: Plasmin C (150 aa).

A signal peptide spans 1-14 (MRSFFLLCALVAVC).

This chain is Plasmin C (PLSC), found in Physarum polycephalum (Slime mold).